The primary structure comprises 869 residues: DNA mismatch repair protein MutS (869 aa).

619–626 (GPNMAGKS) serves as a coordination point for ATP.

Belongs to the DNA mismatch repair MutS family.

In terms of biological role, this protein is involved in the repair of mismatches in DNA. It is possible that it carries out the mismatch recognition step. This protein has a weak ATPase activity. The protein is DNA mismatch repair protein MutS of Caldanaerobacter subterraneus subsp. tengcongensis (strain DSM 15242 / JCM 11007 / NBRC 100824 / MB4) (Thermoanaerobacter tengcongensis).